A 155-amino-acid chain; its full sequence is SsrA-binding protein (155 aa).

This sequence belongs to the SmpB family.

The protein resides in the cytoplasm. Its function is as follows. Required for rescue of stalled ribosomes mediated by trans-translation. Binds to transfer-messenger RNA (tmRNA), required for stable association of tmRNA with ribosomes. tmRNA and SmpB together mimic tRNA shape, replacing the anticodon stem-loop with SmpB. tmRNA is encoded by the ssrA gene; the 2 termini fold to resemble tRNA(Ala) and it encodes a 'tag peptide', a short internal open reading frame. During trans-translation Ala-aminoacylated tmRNA acts like a tRNA, entering the A-site of stalled ribosomes, displacing the stalled mRNA. The ribosome then switches to translate the ORF on the tmRNA; the nascent peptide is terminated with the 'tag peptide' encoded by the tmRNA and targeted for degradation. The ribosome is freed to recommence translation, which seems to be the essential function of trans-translation. In Streptococcus equi subsp. zooepidemicus (strain MGCS10565), this protein is SsrA-binding protein.